A 260-amino-acid chain; its full sequence is DNA repair protein RecO (260 aa).

Belongs to the RecO family.

Involved in DNA repair and RecF pathway recombination. The polypeptide is DNA repair protein RecO (Desulfosudis oleivorans (strain DSM 6200 / JCM 39069 / Hxd3) (Desulfococcus oleovorans)).